We begin with the raw amino-acid sequence, 173 residues long: Small ribosomal subunit protein uS7 (173 aa).

The protein belongs to the universal ribosomal protein uS7 family. In terms of assembly, part of the 30S ribosomal subunit. Contacts proteins S9 and S11.

One of the primary rRNA binding proteins, it binds directly to 16S rRNA where it nucleates assembly of the head domain of the 30S subunit. Is located at the subunit interface close to the decoding center, probably blocks exit of the E-site tRNA. This Orientia tsutsugamushi (strain Boryong) (Rickettsia tsutsugamushi) protein is Small ribosomal subunit protein uS7.